The chain runs to 180 residues: Large ribosomal subunit protein uL5c (180 aa).

Belongs to the universal ribosomal protein uL5 family. In terms of assembly, part of the 50S ribosomal subunit; contacts the 5S rRNA.

It localises to the plastid. Its subcellular location is the chloroplast. Binds 5S rRNA, forms part of the central protuberance of the 50S subunit. This Tupiella akineta (Green alga) protein is Large ribosomal subunit protein uL5c (rpl5).